Consider the following 164-residue polypeptide: Thiol peroxidase (164 aa).

Positions 18-163 (INEGDFAPDF…FDAALAAYKN (146 aa)) constitute a Thioredoxin domain. Cys60 acts as the Cysteine sulfenic acid (-SOH) intermediate in catalysis. A disulfide bridge connects residues Cys60 and Cys93.

The protein belongs to the peroxiredoxin family. Tpx subfamily. As to quaternary structure, homodimer.

The catalysed reaction is a hydroperoxide + [thioredoxin]-dithiol = an alcohol + [thioredoxin]-disulfide + H2O. Its function is as follows. Thiol-specific peroxidase that catalyzes the reduction of hydrogen peroxide and organic hydroperoxides to water and alcohols, respectively. Plays a role in cell protection against oxidative stress by detoxifying peroxides. The sequence is that of Thiol peroxidase from Staphylococcus aureus (strain Mu50 / ATCC 700699).